Here is a 381-residue protein sequence, read N- to C-terminus: Erythronate-4-phosphate dehydrogenase (381 aa).

The substrate site is built by Ser-45 and Thr-66. Positions 146 and 173 each coordinate NAD(+). Arg-206 is an active-site residue. Asp-230 provides a ligand contact to NAD(+). Glu-235 is an active-site residue. His-252 functions as the Proton donor in the catalytic mechanism. Gly-255 is an NAD(+) binding site. Tyr-256 contributes to the substrate binding site.

Belongs to the D-isomer specific 2-hydroxyacid dehydrogenase family. PdxB subfamily. In terms of assembly, homodimer.

It localises to the cytoplasm. The enzyme catalyses 4-phospho-D-erythronate + NAD(+) = (R)-3-hydroxy-2-oxo-4-phosphooxybutanoate + NADH + H(+). Its pathway is cofactor biosynthesis; pyridoxine 5'-phosphate biosynthesis; pyridoxine 5'-phosphate from D-erythrose 4-phosphate: step 2/5. In terms of biological role, catalyzes the oxidation of erythronate-4-phosphate to 3-hydroxy-2-oxo-4-phosphonooxybutanoate. The chain is Erythronate-4-phosphate dehydrogenase from Hahella chejuensis (strain KCTC 2396).